The following is a 323-amino-acid chain: MPADHIPALALAGPTASGKTAAAFAIADALAPRLPVEIISVDSALVYSGMDIGTAKPTPAEQARVPHHLIDIRDPLQAYSAAEFVQDATRLIGEIRARGALPLLVGGTMLYFKALFDGIDDMPPADAAVRARLEAQAAAIGWSGMHAELARVDPPTAARLAPGDSQRIQRALEVWHVSGRPLSSFHTTKTVAASARPMSAASLFSLEPHDRAWLHGRIAERFHAMLAAGFLDEVLRLRARGDLHADLPSMRCVGYRQAWESLDGLYPMSSLPERGIAATRQLAKRQITWLRSMPERHSIACDAPDATAQLVQAVRARVWGGGA.

13 to 20 provides a ligand contact to ATP; sequence GPTASGKT. Position 15 to 20 (15 to 20) interacts with substrate; the sequence is TASGKT. Interaction with substrate tRNA regions lie at residues 42-45, 166-170, 251-256, and 284-291; these read DSAL, QRIQR, RCVGYR, and KRQITWLR.

This sequence belongs to the IPP transferase family. Monomer. Mg(2+) is required as a cofactor.

The catalysed reaction is adenosine(37) in tRNA + dimethylallyl diphosphate = N(6)-dimethylallyladenosine(37) in tRNA + diphosphate. In terms of biological role, catalyzes the transfer of a dimethylallyl group onto the adenine at position 37 in tRNAs that read codons beginning with uridine, leading to the formation of N6-(dimethylallyl)adenosine (i(6)A). In Acidovorax ebreus (strain TPSY) (Diaphorobacter sp. (strain TPSY)), this protein is tRNA dimethylallyltransferase.